Here is a 260-residue protein sequence, read N- to C-terminus: NAD-capped RNA hydrolase NudC (260 aa).

Arginine 69 contacts substrate. Residues cysteine 98 and cysteine 101 each contribute to the Zn(2+) site. Position 111 (glutamate 111) interacts with substrate. Zn(2+)-binding residues include cysteine 116 and cysteine 119. Tyrosine 124 lines the substrate pocket. In terms of domain architecture, Nudix hydrolase spans proline 125–threonine 248. Residues alanine 158, glutamate 174, and glutamate 178 each contribute to the a divalent metal cation site. The short motif at glycine 159–glutamine 180 is the Nudix box element. Residue glutamine 192–serine 199 coordinates substrate. A divalent metal cation is bound at residue glutamate 219. Substrate is bound at residue alanine 241.

The protein belongs to the Nudix hydrolase family. NudC subfamily. In terms of assembly, homodimer. Mg(2+) is required as a cofactor. Requires Mn(2+) as cofactor. Zn(2+) serves as cofactor.

The catalysed reaction is a 5'-end NAD(+)-phospho-ribonucleoside in mRNA + H2O = a 5'-end phospho-adenosine-phospho-ribonucleoside in mRNA + beta-nicotinamide D-ribonucleotide + 2 H(+). The enzyme catalyses NAD(+) + H2O = beta-nicotinamide D-ribonucleotide + AMP + 2 H(+). It carries out the reaction NADH + H2O = reduced beta-nicotinamide D-ribonucleotide + AMP + 2 H(+). Functionally, mRNA decapping enzyme that specifically removes the nicotinamide adenine dinucleotide (NAD) cap from a subset of mRNAs by hydrolyzing the diphosphate linkage to produce nicotinamide mononucleotide (NMN) and 5' monophosphate mRNA. The NAD-cap is present at the 5'-end of some mRNAs and stabilizes RNA against 5'-processing. Has preference for mRNAs with a 5'-end purine. Catalyzes the hydrolysis of a broad range of dinucleotide pyrophosphates. The polypeptide is NAD-capped RNA hydrolase NudC (Pectobacterium atrosepticum (strain SCRI 1043 / ATCC BAA-672) (Erwinia carotovora subsp. atroseptica)).